A 99-amino-acid chain; its full sequence is MIKINISQNFLVAKGHALFAEKGKDIVCAAISGIIFGGVAWFEPDKIEFTENKLVPSIALKLIDPTPNVAVAFSVITVQLKAIANSYPNHIVINEESYE.

His16 functions as the Proton donor in the catalytic mechanism. Cys28 (nucleophile) is an active-site residue.

It belongs to the Prp family. In terms of assembly, homodimer.

Functionally, an essential cysteine protease that cleaves the N-terminus from ribosomal protein bL27. The sequence is that of Ribosomal processing cysteine protease Prp from Mycoplasma genitalium (strain ATCC 33530 / DSM 19775 / NCTC 10195 / G37) (Mycoplasmoides genitalium).